Consider the following 200-residue polypeptide: Chromophore lyase CpcT/CpeT 2 (200 aa).

Belongs to the CpcT/CpeT biliprotein lyase family.

Covalently attaches a chromophore to Cys residue(s) of phycobiliproteins. The sequence is that of Chromophore lyase CpcT/CpeT 2 from Microcystis aeruginosa (strain NIES-843 / IAM M-2473).